We begin with the raw amino-acid sequence, 441 residues long: Mitochondrial distribution and morphology protein 12 (441 aa).

The SMP-LTD domain maps to 1-441; sequence MSIDIDWERA…VYPSFWTFLV (441 aa). Disordered stretches follow at residues 70 to 89 and 180 to 289; these read YEDGDEDLSVSSEEQSPMRE and TPLR…RMRE. Polar residues-rich tracts occupy residues 226–245 and 253–263; these read SRPSTVNTGNTLFSRGSVST and SSQTVLANNPG.

The protein belongs to the MDM12 family. As to quaternary structure, component of the ER-mitochondria encounter structure (ERMES) or MDM complex, composed of MMM1, MDM10, MDM12 and MDM34. An MMM1 homodimer associates with one molecule of MDM12 on each side in a pairwise head-to-tail manner, and the SMP-LTD domains of MMM1 and MDM12 generate a continuous hydrophobic tunnel for phospholipid trafficking.

Its subcellular location is the mitochondrion outer membrane. It localises to the endoplasmic reticulum membrane. In terms of biological role, component of the ERMES/MDM complex, which serves as a molecular tether to connect the endoplasmic reticulum (ER) and mitochondria. Components of this complex are involved in the control of mitochondrial shape and protein biogenesis, and function in nonvesicular lipid trafficking between the ER and mitochondria. MDM12 is required for the interaction of the ER-resident membrane protein MMM1 and the outer mitochondrial membrane-resident beta-barrel protein MDM10. The MDM12-MMM1 subcomplex functions in the major beta-barrel assembly pathway that is responsible for biogenesis of all mitochondrial outer membrane beta-barrel proteins, and acts in a late step after the SAM complex. The MDM10-MDM12-MMM1 subcomplex further acts in the TOM40-specific pathway after the action of the MDM12-MMM1 complex. Essential for establishing and maintaining the structure of mitochondria and maintenance of mtDNA nucleoids. The sequence is that of Mitochondrial distribution and morphology protein 12 from Paracoccidioides brasiliensis (strain Pb03).